Reading from the N-terminus, the 272-residue chain is Indole-3-glycerol phosphate synthase (272 aa).

Belongs to the TrpC family.

It catalyses the reaction 1-(2-carboxyphenylamino)-1-deoxy-D-ribulose 5-phosphate + H(+) = (1S,2R)-1-C-(indol-3-yl)glycerol 3-phosphate + CO2 + H2O. The protein operates within amino-acid biosynthesis; L-tryptophan biosynthesis; L-tryptophan from chorismate: step 4/5. This Mycolicibacterium vanbaalenii (strain DSM 7251 / JCM 13017 / BCRC 16820 / KCTC 9966 / NRRL B-24157 / PYR-1) (Mycobacterium vanbaalenii) protein is Indole-3-glycerol phosphate synthase.